We begin with the raw amino-acid sequence, 110 residues long: UPF0060 membrane protein PBPRB0495 (110 aa).

4 consecutive transmembrane segments (helical) span residues 7–27 (VGLF…PYLW), 33–53 (TIWL…LLTL), 63–83 (AAYG…VDGI), and 85–105 (PTVW…IIMF).

The protein belongs to the UPF0060 family.

The protein resides in the cell inner membrane. This chain is UPF0060 membrane protein PBPRB0495, found in Photobacterium profundum (strain SS9).